The chain runs to 1065 residues: N-terminal acetyltransferase B complex auxiliary subunit NAA25 (1065 aa).

The stretch at 294 to 327 (VDKLRIQGRLLARANDYSAAVDVYKKILELSPDD) is one TPR repeat.

This sequence belongs to the MDM20/NAA25 family. Ubiquitously expressed, with a higher expression in vascular bundles, hydathodes, leaf primordia and the base of the trichomes.

Its subcellular location is the cytoplasm. Auxiliary subunit of the NatB N-alpha-acetyltransferase complex. Required for flowering time regulation and for vegetative and reproductive plant development. In Arabidopsis thaliana (Mouse-ear cress), this protein is N-terminal acetyltransferase B complex auxiliary subunit NAA25.